The sequence spans 261 residues: UPF0246 protein Daci_5283 (261 aa).

It belongs to the UPF0246 family.

The protein is UPF0246 protein Daci_5283 of Delftia acidovorans (strain DSM 14801 / SPH-1).